Consider the following 2169-residue polypeptide: Protein sidekick-1 (2169 aa).

A signal peptide spans 1 to 50 (MVGRKVDREIIARRNSRRDGMMMKLNFCFFFCRRWWAFLLLQLHMLQALA). Residues 51–1961 (QDDVAPYFKT…TEAPFYEEWW (1911 aa)) are Extracellular-facing. Ig-like C2-type domains are found at residues 56 to 138 (PYFK…SEVQ), 143 to 229 (GNFM…SPLI), 245 to 333 (PIIV…AFIS), 338 to 428 (PYFT…LDVT), and 432 to 521 (PAFI…VMLT). C78 and C121 are disulfide-bonded. N-linked (GlcNAc...) asparagine glycosylation is found at N93, N223, and N253. 3 disulfides stabilise this stretch: C267-C314, C360-C410, and C453-C505. N-linked (GlcNAc...) asparagine glycans are attached at residues N502, N524, and N534. Residues 525-615 (RTFIVHPPEN…GNDSRMARLE (91 aa)) enclose the Ig-like C2-type 6 domain. C547 and C599 are oxidised to a cystine. 7 N-linked (GlcNAc...) asparagine glycosylation sites follow: N607, N631, N734, N773, N834, N967, and N977. 13 consecutive Fibronectin type-III domains span residues 622–718 (SPQN…LPEE), 723–819 (PPKN…TLQG), 824–922 (PPQN…TLED), 926–1020 (AVGH…VPPE), 1024–1123 (APSN…TLQA), 1128–1226 (APGS…TRES), 1231–1328 (PPEN…TKDD), 1332–1426 (PPIR…TEKR), 1431–1528 (PPQQ…TLQD), 1533–1651 (PPSS…VGEA), 1656–1752 (APQN…THQA), 1756–1851 (APSF…AGPA), and 1854–1955 (SPGS…TEAP). N-linked (GlcNAc...) asparagine glycans are attached at residues N1234 and N1285. The disordered stretch occupies residues 1423–1443 (TEKRERPAPPQQLTTPQSDVS). The segment covering 1433–1443 (QQLTTPQSDVS) has biased composition (polar residues). N1606, N1700, N1719, N1771, and N1845 each carry an N-linked (GlcNAc...) asparagine glycan. The chain crosses the membrane as a helical span at residues 1962–1982 (FLLVMALSSLILILLVVFALV). The Cytoplasmic portion of the chain corresponds to 1983 to 2169 (LHGQSKKYKN…TPVTGFSSFV (187 aa)). Disordered stretches follow at residues 2028–2050 (TFSKKNGTRSPPRPSPGGLHYSD) and 2145–2169 (GGVYTPTGQPAPGSRTPVTGFSSFV). Over residues 2160–2169 (TPVTGFSSFV) the composition is skewed to polar residues. The PDZ-binding signature appears at 2163-2169 (TGFSSFV).

It belongs to the sidekick family. In terms of assembly, homodimer; mediates homophilic interactions to promote cell adhesion. In terms of tissue distribution, expressed by non-overlapping subsets of retinal neurons. SDK1, SDK2, DSCAM and DSCAML1 are expressed in non-overlapping subsets of interneurons and retinal ganglion cells (RGCs) that form synapses in distinct inner plexiform layer (IPL) sublaminae.

The protein resides in the cell membrane. Its subcellular location is the synapse. Functionally, adhesion molecule that promotes lamina-specific synaptic connections in the retina. Expressed in specific subsets of interneurons and retinal ganglion cells (RGCs) and promotes synaptic connectivity via homophilic interactions. This is Protein sidekick-1 from Gallus gallus (Chicken).